Reading from the N-terminus, the 218-residue chain is Glutathione S-transferase U22 (218 aa).

The residue at position 2 (alanine 2) is an N-acetylalanine. One can recognise a GST N-terminal domain in the interval aspartate 3–asparagine 82. Glutathione contacts are provided by residues serine 13–proline 14, aspartate 39–lysine 40, lysine 53–isoleucine 54, and glutamate 66–serine 67. Residues aspartate 88–phenylalanine 208 form the GST C-terminal domain. Residue threonine 149 is modified to Phosphothreonine.

This sequence belongs to the GST superfamily. Tau family.

The protein resides in the cytoplasm. It localises to the cytosol. The catalysed reaction is RX + glutathione = an S-substituted glutathione + a halide anion + H(+). Its function is as follows. May be involved in the conjugation of reduced glutathione to a wide number of exogenous and endogenous hydrophobic electrophiles and have a detoxification role against certain herbicides. This is Glutathione S-transferase U22 (GSTU22) from Arabidopsis thaliana (Mouse-ear cress).